The primary structure comprises 257 residues: MDRIIEKLDHGWWVVSHEQKLWLPKGELPYGEAANFDLVGQRALQIGEWQGEPVWLVQQQRRHDMGSVRQVIDLDVVLFQLAGRGVQLAEFYRSHKYCGYCGHEMYPSKTEWAMLCSHCRERYYPQIAPCIIVAIRRDDSILLAQHTRHRNGVHTVLAGFVEVGETLEQAVAREVMEESGIKVKNLRYVTSQPWPFPQSLMTAFMAEYDSGDIVIDPKELLEANWYRYDDLPLLPPPGTVARRLIEDTVAMCRAEYE.

Substrate-binding residues include K25 and R69. The Zn(2+) site is built by C98 and C101. E111 contributes to the substrate binding site. Residues C116 and C119 each coordinate Zn(2+). Residue Y124 coordinates substrate. Residues 125–248 (PQIAPCIIVA…TVARRLIEDT (124 aa)) form the Nudix hydrolase domain. Residues A158, E174, and E178 each contribute to the a divalent metal cation site. The Nudix box motif lies at 159 to 180 (GFVEVGETLEQAVAREVMEESG). 192–199 (QPWPFPQS) contacts substrate. E219 contacts a divalent metal cation. A241 contacts substrate.

The protein belongs to the Nudix hydrolase family. NudC subfamily. As to quaternary structure, homodimer. Mg(2+) is required as a cofactor. The cofactor is Mn(2+). Requires Zn(2+) as cofactor.

It carries out the reaction a 5'-end NAD(+)-phospho-ribonucleoside in mRNA + H2O = a 5'-end phospho-adenosine-phospho-ribonucleoside in mRNA + beta-nicotinamide D-ribonucleotide + 2 H(+). It catalyses the reaction NAD(+) + H2O = beta-nicotinamide D-ribonucleotide + AMP + 2 H(+). The enzyme catalyses NADH + H2O = reduced beta-nicotinamide D-ribonucleotide + AMP + 2 H(+). Functionally, mRNA decapping enzyme that specifically removes the nicotinamide adenine dinucleotide (NAD) cap from a subset of mRNAs by hydrolyzing the diphosphate linkage to produce nicotinamide mononucleotide (NMN) and 5' monophosphate mRNA. The NAD-cap is present at the 5'-end of some mRNAs and stabilizes RNA against 5'-processing. Has preference for mRNAs with a 5'-end purine. Catalyzes the hydrolysis of a broad range of dinucleotide pyrophosphates. The protein is NAD-capped RNA hydrolase NudC of Shigella boydii serotype 18 (strain CDC 3083-94 / BS512).